A 372-amino-acid chain; its full sequence is L-selectin (372 aa).

Positions 1–28 (MIFPRKCQSTQRDLWNIFKLWGWTMLCC) are cleaved as a signal peptide. A propeptide spanning residues 29–38 (DFLAHHGTDC) is cleaved from the precursor. Residues 39–332 (WTYHYSENPM…FSMIKEGDYN (294 aa)) lie on the Extracellular side of the membrane. In terms of domain architecture, C-type lectin spans 55–155 (RFCRENYTDL…ACHKPKAALC (101 aa)). 10 disulfides stabilise this stretch: Cys57–Cys155, Cys128–Cys147, Cys128–Cys160, Cys160–Cys171, Cys165–Cys180, Cys182–Cys191, Cys197–Cys241, Cys227–Cys254, Cys259–Cys303, and Cys289–Cys316. N-linked (GlcNAc...) asparagine glycosylation is found at Asn60 and Asn104. Ca(2+)-binding residues include Glu118, Asn120, Glu126, Asn143, and Asp144. Residues 156–192 (YTASCQPWSCSGHGECVEIINNYTCNCDVGYYGPQCQ) form the EGF-like domain. An N-linked (GlcNAc...) asparagine glycan is attached at Asn177. 2 Sushi domains span residues 195 to 256 (IQCE…TCQV) and 257 to 318 (IQCE…ICQK). N-linked (GlcNAc...) asparagine glycans are attached at residues Asn226, Asn232, Asn246, and Asn271. Residues 333 to 355 (PLFIPVAVMVTAFSGLAFIIWLA) traverse the membrane as a helical segment. The Cytoplasmic portion of the chain corresponds to 356–372 (RRLKKGKKSKKSMDDPY).

It belongs to the selectin/LECAM family. In terms of assembly, interaction with SELPLG/PSGL1 and PODXL2 is required for promoting recruitment and rolling of leukocytes. This interaction is dependent on the sialyl Lewis X glycan modification of SELPLG and PODXL2, and tyrosine sulfation modifications of SELPLG. Sulfation on 'Tyr-51' of SELPLG is important for L-selectin binding. In terms of processing, N-glycosylated.

The protein resides in the cell membrane. Functionally, calcium-dependent lectin that mediates cell adhesion by binding to glycoproteins on neighboring cells. Mediates the adherence of lymphocytes to endothelial cells of high endothelial venules in peripheral lymph nodes. Promotes initial tethering and rolling of leukocytes in endothelia. The polypeptide is L-selectin (SELL) (Macaca mulatta (Rhesus macaque)).